A 732-amino-acid polypeptide reads, in one-letter code: Phosphoribosylformylglycinamidine synthase subunit PurL (732 aa).

Residue His-32 is part of the active site. Residue Tyr-35 participates in ATP binding. Position 81 (Glu-81) interacts with Mg(2+). Residues 82-85 (SHNH) and Arg-104 each bind substrate. His-83 (proton acceptor) is an active-site residue. Asp-105 contacts Mg(2+). Gln-230 serves as a coordination point for substrate. Asp-258 contacts Mg(2+). Substrate is bound at residue 302–304 (ESQ). ATP-binding residues include Asp-485 and Gly-522. Asn-523 contacts Mg(2+). Ser-525 contributes to the substrate binding site.

This sequence belongs to the FGAMS family. Monomer. Part of the FGAM synthase complex composed of 1 PurL, 1 PurQ and 2 PurS subunits.

It localises to the cytoplasm. It carries out the reaction N(2)-formyl-N(1)-(5-phospho-beta-D-ribosyl)glycinamide + L-glutamine + ATP + H2O = 2-formamido-N(1)-(5-O-phospho-beta-D-ribosyl)acetamidine + L-glutamate + ADP + phosphate + H(+). It functions in the pathway purine metabolism; IMP biosynthesis via de novo pathway; 5-amino-1-(5-phospho-D-ribosyl)imidazole from N(2)-formyl-N(1)-(5-phospho-D-ribosyl)glycinamide: step 1/2. Functionally, part of the phosphoribosylformylglycinamidine synthase complex involved in the purines biosynthetic pathway. Catalyzes the ATP-dependent conversion of formylglycinamide ribonucleotide (FGAR) and glutamine to yield formylglycinamidine ribonucleotide (FGAM) and glutamate. The FGAM synthase complex is composed of three subunits. PurQ produces an ammonia molecule by converting glutamine to glutamate. PurL transfers the ammonia molecule to FGAR to form FGAM in an ATP-dependent manner. PurS interacts with PurQ and PurL and is thought to assist in the transfer of the ammonia molecule from PurQ to PurL. The protein is Phosphoribosylformylglycinamidine synthase subunit PurL of Methanococcus aeolicus (strain ATCC BAA-1280 / DSM 17508 / OCM 812 / Nankai-3).